The chain runs to 361 residues: MYIKNLELINFRNYEILSLKLHSGINVFIGDNAQGKTNILESIYYCSIGKSHRTNKDKELIKWGARDAYISVYISKERLDKKIDIKIFKEGKKGVRVNSIKLKTISDLIGVFNVVMFSPEDLKIVKESPSYRRKFLDIELSKLNKKYYYSLVRYNKVLNERNTILRKWNSNTEVTEVYDHQLSKYGSYIIKERLKYIESLSIRGNKIHKDITSQKENIEFKYITSIKDLNNIQNDFYNLLRENVKKDFEKGSTSFGPHRDDFAVNINNTDTRTFGSQGQQRTAVLTIKLASLEIIKEQTGEYPVLLLDDVLSELDINRQKYILNSIREFQTIITGTGLIDIREYLDDHVKLFKVTNGTVNQ.

30-37 (GDNAQGKT) is an ATP binding site.

This sequence belongs to the RecF family.

The protein localises to the cytoplasm. In terms of biological role, the RecF protein is involved in DNA metabolism; it is required for DNA replication and normal SOS inducibility. RecF binds preferentially to single-stranded, linear DNA. It also seems to bind ATP. This chain is DNA replication and repair protein RecF, found in Clostridium novyi (strain NT).